A 458-amino-acid polypeptide reads, in one-letter code: Probable M18 family aminopeptidase 1 (458 aa).

Zn(2+)-binding residues include H95, H170, and H434.

This sequence belongs to the peptidase M18 family. It depends on Zn(2+) as a cofactor.

This chain is Probable M18 family aminopeptidase 1, found in Borrelia garinii subsp. bavariensis (strain ATCC BAA-2496 / DSM 23469 / PBi) (Borreliella bavariensis).